Consider the following 247-residue polypeptide: Eukaryotic translation initiation factor 6 (247 aa).

Phosphoserine; by CK1 occurs at positions 174 and 175.

Belongs to the eIF-6 family. In terms of assembly, monomer. Associates with the 60S ribosomal subunit. In terms of processing, phosphorylation at Ser-174 and Ser-175 promotes nuclear export.

Its subcellular location is the cytoplasm. The protein localises to the nucleus. It is found in the nucleolus. Its function is as follows. Binds to the 60S ribosomal subunit and prevents its association with the 40S ribosomal subunit to form the 80S initiation complex in the cytoplasm. Is also involved in ribosome biogenesis. Associates with pre-60S subunits in the nucleus and is involved in its nuclear export. In Aspergillus oryzae (strain ATCC 42149 / RIB 40) (Yellow koji mold), this protein is Eukaryotic translation initiation factor 6 (tif6).